Here is a 192-residue protein sequence, read N- to C-terminus: Adenylate kinase (192 aa).

10–18 contributes to the ATP binding site; it reads GVPGVGGTT.

Belongs to the archaeal adenylate kinase family. In terms of assembly, monomer.

It localises to the cytoplasm. It carries out the reaction AMP + ATP = 2 ADP. The protein is Adenylate kinase (adkA) of Methanotorris igneus (Methanococcus igneus).